We begin with the raw amino-acid sequence, 431 residues long: Neuronal pentraxin-2 (431 aa).

The signal sequence occupies residues methionine 1–alanine 15. 2 N-linked (GlcNAc...) asparagine glycosylation sites follow: asparagine 148 and asparagine 189. The Pentraxin (PTX) domain occupies aspartate 223–cysteine 424. The cysteines at positions 253 and 313 are disulfide-linked. Positions 277, 355, 356, 357, and 367 each coordinate Ca(2+). Asparagine 393 carries an N-linked (GlcNAc...) asparagine glycan.

As to quaternary structure, homooligomer or heterooligomer (probably pentamer) with neuronal pentraxin receptor (NPTXR). The cofactor is Ca(2+). As to expression, brain, pancreas, liver, heart and skeletal muscle. Highest levels are seen in the testis.

The protein localises to the secreted. In terms of biological role, likely to play role in the modification of cellular properties that underlie long-term plasticity. Binds to agar matrix in a calcium-dependent manner. This Homo sapiens (Human) protein is Neuronal pentraxin-2 (NPTX2).